The chain runs to 339 residues: Phenylalanine--tRNA ligase alpha subunit (339 aa).

Residue E254 participates in Mg(2+) binding.

Belongs to the class-II aminoacyl-tRNA synthetase family. Phe-tRNA synthetase alpha subunit type 1 subfamily. Tetramer of two alpha and two beta subunits. Mg(2+) serves as cofactor.

The protein localises to the cytoplasm. It catalyses the reaction tRNA(Phe) + L-phenylalanine + ATP = L-phenylalanyl-tRNA(Phe) + AMP + diphosphate + H(+). The protein is Phenylalanine--tRNA ligase alpha subunit of Desulforudis audaxviator (strain MP104C).